A 507-amino-acid polypeptide reads, in one-letter code: Histidine ammonia-lyase (507 aa).

Positions 141–143 form a cross-link, 5-imidazolinone (Ala-Gly); that stretch reads ASG. S142 bears the 2,3-didehydroalanine (Ser) mark.

The protein belongs to the PAL/histidase family. Post-translationally, contains an active site 4-methylidene-imidazol-5-one (MIO), which is formed autocatalytically by cyclization and dehydration of residues Ala-Ser-Gly.

It is found in the cytoplasm. The catalysed reaction is L-histidine = trans-urocanate + NH4(+). It participates in amino-acid degradation; L-histidine degradation into L-glutamate; N-formimidoyl-L-glutamate from L-histidine: step 1/3. In Cereibacter sphaeroides (strain ATCC 17023 / DSM 158 / JCM 6121 / CCUG 31486 / LMG 2827 / NBRC 12203 / NCIMB 8253 / ATH 2.4.1.) (Rhodobacter sphaeroides), this protein is Histidine ammonia-lyase.